The sequence spans 224 residues: Peptidyl-prolyl cis-trans isomerase FKBP3 (224 aa).

At Ala2 the chain carries N-acetylalanine. Ser36 is subject to Phosphoserine. Positions 89–102 are enriched in basic and acidic residues; sequence KLNEDKPKETKSEE. Residues 89–111 form a disordered region; the sequence is KLNEDKPKETKSEETLDEGPPKY. Lys99 is subject to N6-acetyllysine. In terms of domain architecture, PPIase FKBP-type spans 128–224; the sequence is GDVVHCWYTG…TFEVELVDID (97 aa). Position 152 is a phosphoserine (Ser152). An N6-acetyllysine modification is found at Lys170.

The protein belongs to the FKBP-type PPIase family.

The protein localises to the nucleus. It catalyses the reaction [protein]-peptidylproline (omega=180) = [protein]-peptidylproline (omega=0). Its activity is regulated as follows. Inhibited preferentially by rapamycin over FK506. Its function is as follows. FK506- and rapamycin-binding proteins (FKBPs) constitute a family of receptors for the two immunosuppressants which inhibit T-cell proliferation by arresting two distinct cytoplasmic signal transmission pathways. PPIases accelerate the folding of proteins. This is Peptidyl-prolyl cis-trans isomerase FKBP3 (FKBP3) from Homo sapiens (Human).